The sequence spans 650 residues: Chaperone protein DnaK (650 aa).

A Phosphothreonine; by autocatalysis modification is found at threonine 200.

The protein belongs to the heat shock protein 70 family.

Its function is as follows. Acts as a chaperone. The chain is Chaperone protein DnaK from Paraburkholderia phytofirmans (strain DSM 17436 / LMG 22146 / PsJN) (Burkholderia phytofirmans).